The following is a 677-amino-acid chain: Glutamine--fructose-6-phosphate aminotransferase [isomerizing] 1 (677 aa).

The Nucleophile role is filled by Cys2. A Glutamine amidotransferase type-2 domain is found at 2 to 269 (CGIFAYLNFH…DGEVVNLKDG (268 aa)). 2 SIS domains span residues 353–492 (HLKT…DTIS) and 524–667 (LAQL…VDQP). Residues 370–371 (TS), 415–417 (SQS), Thr420, and His571 each bind substrate.

As to quaternary structure, homotetramer, may also exist as homodimers. Highly expressed in flowers specifically in mature anthers, mature pollen grains and pollen tubes. Barely observed in roots, leaves and stems.

The catalysed reaction is D-fructose 6-phosphate + L-glutamine = D-glucosamine 6-phosphate + L-glutamate. The protein operates within nucleotide-sugar biosynthesis; UDP-N-acetyl-alpha-D-glucosamine biosynthesis; alpha-D-glucosamine 6-phosphate from D-fructose 6-phosphate: step 1/1. Controls the flux of glucose into the hexosamine biosynthetic pathway (HBP) leading to glucosamine (GlcN) content homeostasis. Involved in regulating the availability of precursors for N- and O-linked glycosylation of proteins. Required during pollen maturation and pollen tube formation by triggering polar deposition of pectin and callose in the pollen cell wall. Promotes tolerance to tunicamycin (Tm), an inhibitor of proteins N-glycosylation in endoplasmic reticulum (ER). The chain is Glutamine--fructose-6-phosphate aminotransferase [isomerizing] 1 from Arabidopsis thaliana (Mouse-ear cress).